Here is a 321-residue protein sequence, read N- to C-terminus: Putative ribose-phosphate pyrophosphokinase 2 (321 aa).

ATP is bound by residues 41–43 and 100–101; these read DGE and RQ. Residue His-134 coordinates Mg(2+). D-ribose 5-phosphate is bound by residues Asp-223 and 227 to 231; that span reads NTGVT.

This sequence belongs to the ribose-phosphate pyrophosphokinase family. Class I subfamily. As to quaternary structure, homohexamer. Mg(2+) serves as cofactor.

It is found in the cytoplasm. It carries out the reaction D-ribose 5-phosphate + ATP = 5-phospho-alpha-D-ribose 1-diphosphate + AMP + H(+). It functions in the pathway metabolic intermediate biosynthesis; 5-phospho-alpha-D-ribose 1-diphosphate biosynthesis; 5-phospho-alpha-D-ribose 1-diphosphate from D-ribose 5-phosphate (route I): step 1/1. In terms of biological role, involved in the biosynthesis of the central metabolite phospho-alpha-D-ribosyl-1-pyrophosphate (PRPP) via the transfer of pyrophosphoryl group from ATP to 1-hydroxyl of ribose-5-phosphate (Rib-5-P). The sequence is that of Putative ribose-phosphate pyrophosphokinase 2 from Lactococcus lactis subsp. lactis (strain IL1403) (Streptococcus lactis).